The chain runs to 113 residues: Holo-[acyl-carrier-protein] synthase (113 aa).

Positions 5 and 50 each coordinate Mg(2+).

Belongs to the P-Pant transferase superfamily. AcpS family. Mg(2+) is required as a cofactor.

It is found in the cytoplasm. It catalyses the reaction apo-[ACP] + CoA = holo-[ACP] + adenosine 3',5'-bisphosphate + H(+). In terms of biological role, transfers the 4'-phosphopantetheine moiety from coenzyme A to a Ser of acyl-carrier-protein. The chain is Holo-[acyl-carrier-protein] synthase from Nautilia profundicola (strain ATCC BAA-1463 / DSM 18972 / AmH).